Here is a 500-residue protein sequence, read N- to C-terminus: Maturase K (500 aa).

Belongs to the intron maturase 2 family. MatK subfamily.

Its subcellular location is the plastid. The protein localises to the chloroplast. In terms of biological role, usually encoded in the trnK tRNA gene intron. Probably assists in splicing its own and other chloroplast group II introns. The polypeptide is Maturase K (Proboscidea louisianica (Louisiana Devil's-claw)).